We begin with the raw amino-acid sequence, 187 residues long: Threonylcarbamoyl-AMP synthase (187 aa).

The 184-residue stretch at 4-187 (ILTLDNAVAT…DARSGQILRD (184 aa)) folds into the YrdC-like domain.

It belongs to the SUA5 family. TsaC subfamily.

It localises to the cytoplasm. The catalysed reaction is L-threonine + hydrogencarbonate + ATP = L-threonylcarbamoyladenylate + diphosphate + H2O. Its function is as follows. Required for the formation of a threonylcarbamoyl group on adenosine at position 37 (t(6)A37) in tRNAs that read codons beginning with adenine. Catalyzes the conversion of L-threonine, HCO(3)(-)/CO(2) and ATP to give threonylcarbamoyl-AMP (TC-AMP) as the acyladenylate intermediate, with the release of diphosphate. The polypeptide is Threonylcarbamoyl-AMP synthase (Xanthomonas oryzae pv. oryzae (strain MAFF 311018)).